The chain runs to 894 residues: Exocyst complex component 1 (894 aa).

2 coiled-coil regions span residues 152–199 (GDEE…LQVL) and 205–259 (QSIM…NHLI). Residues 437–495 (SKESKKFATLPRKESAVKQETESLHGSSGKLTGSTSSLNKLSVQSSGSRRSQSSSLLDM) are disordered. A compositionally biased stretch (basic and acidic residues) spans 438–459 (KESKKFATLPRKESAVKQETES). Low complexity predominate over residues 460-491 (LHGSSGKLTGSTSSLNKLSVQSSGSRRSQSSS). Position 470 is a phosphoserine (S470). T471 is modified (phosphothreonine). Residues S473, S487, and S501 each carry the phosphoserine modification.

Belongs to the SEC3 family. In terms of assembly, the exocyst complex is composed of EXOC1, EXOC2, EXOC3, EXOC4, EXOC5, EXOC6, EXOC7 and EXOC8. Interacts with EEF1A1. Interacts with SLC6A9; interaction increases the transporter capacity of SLC6A9 probably by promoting its insertion into the cell membrane.

The protein resides in the midbody. Its subcellular location is the midbody ring. It localises to the cytoplasm. The protein localises to the perinuclear region. It is found in the cell membrane. In terms of biological role, component of the exocyst complex involved in the docking of exocytic vesicles with fusion sites on the plasma membrane. The chain is Exocyst complex component 1 (Exoc1) from Mus musculus (Mouse).